Here is a 123-residue protein sequence, read N- to C-terminus: Protein Wnt-7b (123 aa).

A lipid anchor (O-palmitoleoyl serine; by PORCN) is attached at Ser1. A disordered linker region spans residues 33–61 (VEVVRASRLRQPTFLKIKQIKSYQKPMET). Cys89 and Cys104 are disulfide-bonded. An N-linked (GlcNAc...) asparagine glycan is attached at Asn90.

It belongs to the Wnt family. Post-translationally, palmitoleoylation is required for efficient binding to frizzled receptors. Depalmitoleoylation leads to Wnt signaling pathway inhibition.

It is found in the secreted. Its subcellular location is the extracellular space. The protein localises to the extracellular matrix. Ligand for members of the frizzled family of seven transmembrane receptors that functions in the canonical Wnt/beta-catenin signaling pathway. Required for normal fusion of the chorion and the allantois during placenta development. Required for central nervous system (CNS) angiogenesis and blood-brain barrier regulation. The chain is Protein Wnt-7b (WNT7B) from Anser caerulescens (Snow goose).